The chain runs to 86 residues: Putative membrane protein insertion efficiency factor (86 aa).

The tract at residues glycine 64 to serine 86 is disordered. Positions lysine 70–threonine 79 are enriched in low complexity.

The protein belongs to the UPF0161 family.

Its subcellular location is the cell inner membrane. Its function is as follows. Could be involved in insertion of integral membrane proteins into the membrane. This chain is Putative membrane protein insertion efficiency factor, found in Janthinobacterium sp. (strain Marseille) (Minibacterium massiliensis).